We begin with the raw amino-acid sequence, 391 residues long: Serine protease 7 (391 aa).

A signal peptide spans 1 to 27; that stretch reads MKSTRKVVGIFLATCLLPFTVLQNVAA. Positions 28 to 136 are cleaved as a propeptide — activation peptide; that stretch reads QGSCRNPNQK…KCGPHSFSNK (109 aa). One can recognise a Clip domain in the interval 30 to 84; that stretch reads SCRNPNQKQGQCLSIYDCQSLLSVIQQSYVSPEDRTFLRNSQCLDGVGRQPYVCC. 3 disulfide bridges follow: Cys-31–Cys-83, Cys-41–Cys-72, and Cys-47–Cys-84. Residues 91–121 are disordered; sequence GSQEATSAAPPPTTTSSSSRGQDGQAGLGNL. 5 disulfides stabilise this stretch: Cys-128/Cys-264, Cys-167/Cys-183, Cys-211/Cys-216, Cys-310/Cys-327, and Cys-337/Cys-366. The Peptidase S1 domain occupies 137-390; sequence VYNGNDTAID…YMDWIVETIR (254 aa). Asn-141 carries N-linked (GlcNAc...) asparagine glycosylation. His-182 functions as the Charge relay system in the catalytic mechanism. Ca(2+) contacts are provided by Glu-202, Asp-204, Lys-207, and Asp-210. Asp-244 acts as the Charge relay system in catalysis. Ser-341 (charge relay system) is an active-site residue.

The protein belongs to the peptidase S1 family. CLIP subfamily. In terms of assembly, interacts with Spn27A.

The protein localises to the secreted. Functionally, serine protease that, by cleaving and activating prophenoloxidase (PPO1) after immune challenge, plays an essential role in the melanization immune response to septic wounding. May function in diverse Hayan-dependent PPO1-activating cascades that are negatively controlled by different serpin proteins; Spn27A in the hemolymph and Spn77BA in the trachea. Important for the innate immune response to fungi. Regulation of melanization and PPO1 activation appears to be largely independent of the Toll signaling pathway. The protein is Serine protease 7 of Drosophila melanogaster (Fruit fly).